The chain runs to 339 residues: D-erythrose-4-phosphate dehydrogenase (339 aa).

NAD(+)-binding positions include 12–13 and arginine 81; that span reads RI. Substrate is bound by residues 154–156, arginine 200, 213–214, and arginine 236; these read SCT and TR. The active-site Nucleophile is cysteine 155. Asparagine 318 provides a ligand contact to NAD(+).

Belongs to the glyceraldehyde-3-phosphate dehydrogenase family. Epd subfamily. Homotetramer.

It is found in the cytoplasm. It carries out the reaction D-erythrose 4-phosphate + NAD(+) + H2O = 4-phospho-D-erythronate + NADH + 2 H(+). It participates in cofactor biosynthesis; pyridoxine 5'-phosphate biosynthesis; pyridoxine 5'-phosphate from D-erythrose 4-phosphate: step 1/5. In terms of biological role, catalyzes the NAD-dependent conversion of D-erythrose 4-phosphate to 4-phosphoerythronate. This is D-erythrose-4-phosphate dehydrogenase from Cronobacter sakazakii (strain ATCC BAA-894) (Enterobacter sakazakii).